The following is a 607-amino-acid chain: Elongation factor 4 (607 aa).

One can recognise a tr-type G domain in the interval 11 to 193; it reads KNIRNFSIIA…KIVETIPAPS (183 aa). Residues 23–28 and 140–143 each bind GTP; these read DHGKST and NKID.

The protein belongs to the TRAFAC class translation factor GTPase superfamily. Classic translation factor GTPase family. LepA subfamily.

The protein resides in the cell membrane. The catalysed reaction is GTP + H2O = GDP + phosphate + H(+). Required for accurate and efficient protein synthesis under certain stress conditions. May act as a fidelity factor of the translation reaction, by catalyzing a one-codon backward translocation of tRNAs on improperly translocated ribosomes. Back-translocation proceeds from a post-translocation (POST) complex to a pre-translocation (PRE) complex, thus giving elongation factor G a second chance to translocate the tRNAs correctly. Binds to ribosomes in a GTP-dependent manner. This is Elongation factor 4 from Staphylococcus carnosus (strain TM300).